The primary structure comprises 408 residues: Succinylornithine transaminase (408 aa).

Position 252 is an N6-(pyridoxal phosphate)lysine (K252).

It belongs to the class-III pyridoxal-phosphate-dependent aminotransferase family. AstC subfamily. Pyridoxal 5'-phosphate serves as cofactor.

It carries out the reaction N(2)-succinyl-L-ornithine + 2-oxoglutarate = N-succinyl-L-glutamate 5-semialdehyde + L-glutamate. The protein operates within amino-acid degradation; L-arginine degradation via AST pathway; L-glutamate and succinate from L-arginine: step 3/5. Its function is as follows. Catalyzes the transamination of N(2)-succinylornithine and alpha-ketoglutarate into N(2)-succinylglutamate semialdehyde and glutamate. Can also act as an acetylornithine aminotransferase. This is Succinylornithine transaminase from Salmonella agona (strain SL483).